The sequence spans 167 residues: MTSFQAVSFALGCNTLVACYAFTVLEKRSLMTSCTNALSFLFFLLTLRRIHRHWYKPYGAFLLIFVLTLRWFRGPIAWVVVDVVFASCNVVFFSPALSDENWPYVSFFGVVVVIAVHIIVVTHIGAFTACCLLKRVSLKSSEEKKKKKKKKKEKSLHTEREKKKKKF.

Residues 140-167 (SSEEKKKKKKKKKEKSLHTEREKKKKKF) are disordered. The segment covering 145-154 (KKKKKKKKEK) has biased composition (basic residues).

This is an uncharacterized protein from Saccharomyces cerevisiae (strain ATCC 204508 / S288c) (Baker's yeast).